The primary structure comprises 336 residues: Fructose-1,6-bisphosphatase class 1 (336 aa).

Positions 90, 112, 114, and 115 each coordinate Mg(2+). Substrate contacts are provided by residues 115 to 118, N211, and K277; that span reads DGSS. Mg(2+) is bound at residue E283.

The protein belongs to the FBPase class 1 family. Homotetramer. The cofactor is Mg(2+).

Its subcellular location is the cytoplasm. It catalyses the reaction beta-D-fructose 1,6-bisphosphate + H2O = beta-D-fructose 6-phosphate + phosphate. It participates in carbohydrate biosynthesis; gluconeogenesis. This chain is Fructose-1,6-bisphosphatase class 1, found in Pseudomonas paraeruginosa (strain DSM 24068 / PA7) (Pseudomonas aeruginosa (strain PA7)).